We begin with the raw amino-acid sequence, 70 residues long: uncharacterized protein (70 aa).

This is an uncharacterized protein from Acidianus convivator (ATV).